The chain runs to 441 residues: tRNA modification GTPase MnmE (441 aa).

Residues arginine 21, glutamate 79, and lysine 118 each contribute to the (6S)-5-formyl-5,6,7,8-tetrahydrofolate site. The TrmE-type G domain occupies glycine 214–threonine 370. Residues asparagine 224–serine 229, serine 243–threonine 249, and aspartate 268–glycine 271 contribute to the GTP site. The Mg(2+) site is built by serine 228 and threonine 249. Lysine 441 is a (6S)-5-formyl-5,6,7,8-tetrahydrofolate binding site.

This sequence belongs to the TRAFAC class TrmE-Era-EngA-EngB-Septin-like GTPase superfamily. TrmE GTPase family. In terms of assembly, homodimer. Heterotetramer of two MnmE and two MnmG subunits. K(+) serves as cofactor.

The protein localises to the cytoplasm. In terms of biological role, exhibits a very high intrinsic GTPase hydrolysis rate. Involved in the addition of a carboxymethylaminomethyl (cmnm) group at the wobble position (U34) of certain tRNAs, forming tRNA-cmnm(5)s(2)U34. This is tRNA modification GTPase MnmE from Campylobacter concisus (strain 13826).